The following is a 799-amino-acid chain: Protein translocase subunit SecA (799 aa).

ATP-binding positions include Gln-85, 103 to 107 (GEGKT), and Asp-504.

It belongs to the SecA family. As to quaternary structure, monomer and homodimer. Part of the essential Sec protein translocation apparatus which comprises SecA, SecYEG and auxiliary proteins SecDF. Other proteins may also be involved.

It localises to the cell membrane. The protein localises to the cytoplasm. It carries out the reaction ATP + H2O + cellular proteinSide 1 = ADP + phosphate + cellular proteinSide 2.. Functionally, part of the Sec protein translocase complex. Interacts with the SecYEG preprotein conducting channel. Has a central role in coupling the hydrolysis of ATP to the transfer of proteins into and across the cell membrane, serving as an ATP-driven molecular motor driving the stepwise translocation of polypeptide chains across the membrane. In Lactobacillus acidophilus (strain ATCC 700396 / NCK56 / N2 / NCFM), this protein is Protein translocase subunit SecA.